A 409-amino-acid polypeptide reads, in one-letter code: uncharacterized protein (409 aa).

10 helical membrane-spanning segments follow: residues 62-82 (FSLG…WVWI), 100-120 (LLLF…PEAF), 123-143 (MGLL…LFAL), 152-172 (ASFM…TFWI), 183-203 (VVLW…RYWV), 252-272 (GTPW…WIYF), 293-313 (AQYL…FTAV), 328-348 (YNFA…TMWM), 355-375 (VLPY…TLVP), and 376-396 (FVAN…VAVW).

It is found in the cell membrane. This is an uncharacterized protein from Rhizobium meliloti (strain 1021) (Ensifer meliloti).